Reading from the N-terminus, the 366-residue chain is tRNA/tmRNA (uracil-C(5))-methyltransferase (366 aa).

S-adenosyl-L-methionine contacts are provided by Gln-190, Tyr-218, Asn-223, Glu-239, and Asp-299. Cys-324 functions as the Nucleophile in the catalytic mechanism. Glu-358 acts as the Proton acceptor in catalysis.

This sequence belongs to the class I-like SAM-binding methyltransferase superfamily. RNA M5U methyltransferase family. TrmA subfamily.

The enzyme catalyses uridine(54) in tRNA + S-adenosyl-L-methionine = 5-methyluridine(54) in tRNA + S-adenosyl-L-homocysteine + H(+). It catalyses the reaction uridine(341) in tmRNA + S-adenosyl-L-methionine = 5-methyluridine(341) in tmRNA + S-adenosyl-L-homocysteine + H(+). Dual-specificity methyltransferase that catalyzes the formation of 5-methyluridine at position 54 (m5U54) in all tRNAs, and that of position 341 (m5U341) in tmRNA (transfer-mRNA). The chain is tRNA/tmRNA (uracil-C(5))-methyltransferase from Salmonella heidelberg (strain SL476).